The primary structure comprises 153 residues: MVKAVAVLRGDSKITGTVTFEQANESAPTTVSWNITGHDPNAERGMHIHQFGDNTNGCTSAGPHYNPFKKTHGAPTDEVRHVGDLGNIKTDAEGNAVGSVQDKLIKVIGAESILGRTIVVHAGTDDLGRGGNEESKKTGNAGPRPACGVIGIA.

A glycan (N-linked (GlcNAc...) asparagine) is linked at Asn-24. Positions 47, 49, and 64 each coordinate Cu cation. A disulfide bridge links Cys-58 with Cys-147. Zn(2+)-binding residues include His-64, His-72, His-81, and Asp-84. His-121 contributes to the Cu cation binding site. Positions 126–137 are enriched in basic and acidic residues; sequence DLGRGGNEESKK. The interval 126 to 145 is disordered; sequence DLGRGGNEESKKTGNAGPRP. Substrate is bound at residue Arg-144.

Belongs to the Cu-Zn superoxide dismutase family. As to quaternary structure, homodimer. Requires Cu cation as cofactor. Zn(2+) serves as cofactor.

Its subcellular location is the cytoplasm. It catalyses the reaction 2 superoxide + 2 H(+) = H2O2 + O2. Its function is as follows. Destroys radicals which are normally produced within the cells and which are toxic to biological systems. This chain is Superoxide dismutase [Cu-Zn], found in Humicola lutea.